The chain runs to 112 residues: Cryptic phage CTXphi transcriptional repressor RstR (112 aa).

The region spanning 7–61 (LANQRKAINKTQAQMADEIGISLTSYKKYESGEGLPTMENLVKIADALEISIDEL) is the HTH cro/C1-type domain. The segment at residues 18–37 (QAQMADEIGISLTSYKKYES) is a DNA-binding region (H-T-H motif).

In terms of biological role, transcriptional repressor of the integrated CTXPhi phage gene rstA2. This chain is Cryptic phage CTXphi transcriptional repressor RstR (rstR1), found in Vibrio cholerae serotype O1 (strain ATCC 39315 / El Tor Inaba N16961).